The sequence spans 977 residues: Probable RNA-dependent RNA polymerase 5 (977 aa).

The tract at residues 103-122 is disordered; it reads EEMSVDSDAPSPKSLKSEDK.

Belongs to the RdRP family.

The catalysed reaction is RNA(n) + a ribonucleoside 5'-triphosphate = RNA(n+1) + diphosphate. Probably involved in the RNA silencing pathway and required for the generation of small interfering RNAs (siRNAs). The polypeptide is Probable RNA-dependent RNA polymerase 5 (RDR5) (Arabidopsis thaliana (Mouse-ear cress)).